A 78-amino-acid polypeptide reads, in one-letter code: uncharacterized protein (78 aa).

The chain crosses the membrane as a helical span at residues alanine 44–valine 66.

This sequence belongs to the TatC family.

It is found in the plastid. It localises to the chloroplast membrane. This is an uncharacterized protein from Dictyota dichotoma.